The following is a 272-amino-acid chain: Small ribosomal subunit protein uS2 (272 aa).

Residues 238–272 are disordered; it reads ASKEEQTEEAEEETLSSKYREQDFQEAKSGARGEK. Residues 255-272 show a composition bias toward basic and acidic residues; sequence KYREQDFQEAKSGARGEK.

The protein belongs to the universal ribosomal protein uS2 family.

The sequence is that of Small ribosomal subunit protein uS2 from Protochlamydia amoebophila (strain UWE25).